The chain runs to 248 residues: Small ribosomal subunit protein uS3 (248 aa).

Positions I39–T113 constitute a KH type-2 domain. The tract at residues E218 to A248 is disordered. A compositionally biased stretch (basic and acidic residues) spans P238 to A248.

Belongs to the universal ribosomal protein uS3 family. Part of the 30S ribosomal subunit. Forms a tight complex with proteins S10 and S14.

Binds the lower part of the 30S subunit head. Binds mRNA in the 70S ribosome, positioning it for translation. This chain is Small ribosomal subunit protein uS3, found in Synechococcus sp. (strain JA-3-3Ab) (Cyanobacteria bacterium Yellowstone A-Prime).